We begin with the raw amino-acid sequence, 265 residues long: Type III pantothenate kinase (265 aa).

6–13 (DVGNTHTV) serves as a coordination point for ATP. Substrate is bound at residue 112–115 (GADR). Residue Asp114 is the Proton acceptor of the active site. K(+) is bound at residue Asp134. Thr137 serves as a coordination point for ATP. Thr189 contacts substrate.

The protein belongs to the type III pantothenate kinase family. Homodimer. Requires NH4(+) as cofactor. K(+) serves as cofactor.

The protein resides in the cytoplasm. It carries out the reaction (R)-pantothenate + ATP = (R)-4'-phosphopantothenate + ADP + H(+). It participates in cofactor biosynthesis; coenzyme A biosynthesis; CoA from (R)-pantothenate: step 1/5. Catalyzes the phosphorylation of pantothenate (Pan), the first step in CoA biosynthesis. The chain is Type III pantothenate kinase from Streptomyces avermitilis (strain ATCC 31267 / DSM 46492 / JCM 5070 / NBRC 14893 / NCIMB 12804 / NRRL 8165 / MA-4680).